Consider the following 246-residue polypeptide: Ribonuclease PH (246 aa).

Residues arginine 91 and 129 to 131 each bind phosphate; that span reads GTR.

The protein belongs to the RNase PH family. In terms of assembly, homohexameric ring arranged as a trimer of dimers.

It carries out the reaction tRNA(n+1) + phosphate = tRNA(n) + a ribonucleoside 5'-diphosphate. In terms of biological role, phosphorolytic 3'-5' exoribonuclease that plays an important role in tRNA 3'-end maturation. Removes nucleotide residues following the 3'-CCA terminus of tRNAs; can also add nucleotides to the ends of RNA molecules by using nucleoside diphosphates as substrates, but this may not be physiologically important. Probably plays a role in initiation of 16S rRNA degradation (leading to ribosome degradation) during starvation. The chain is Ribonuclease PH from Burkholderia vietnamiensis (strain G4 / LMG 22486) (Burkholderia cepacia (strain R1808)).